The primary structure comprises 744 residues: Phosphoribosylformylglycinamidine synthase subunit PurL (744 aa).

Residue histidine 45 is part of the active site. Residues tyrosine 48 and lysine 87 each coordinate ATP. Glutamate 89 contributes to the Mg(2+) binding site. Residues 90 to 93 (SHNH) and arginine 112 each bind substrate. Catalysis depends on histidine 91, which acts as the Proton acceptor. A Mg(2+)-binding site is contributed by aspartate 113. Glutamine 236 serves as a coordination point for substrate. Residue aspartate 264 participates in Mg(2+) binding. Position 308-310 (308-310 (ESQ)) interacts with substrate. Residues asparagine 492 and glycine 529 each contribute to the ATP site. Asparagine 530 serves as a coordination point for Mg(2+). Residue serine 532 coordinates substrate.

The protein belongs to the FGAMS family. Monomer. Part of the FGAM synthase complex composed of 1 PurL, 1 PurQ and 2 PurS subunits.

It is found in the cytoplasm. The enzyme catalyses N(2)-formyl-N(1)-(5-phospho-beta-D-ribosyl)glycinamide + L-glutamine + ATP + H2O = 2-formamido-N(1)-(5-O-phospho-beta-D-ribosyl)acetamidine + L-glutamate + ADP + phosphate + H(+). It participates in purine metabolism; IMP biosynthesis via de novo pathway; 5-amino-1-(5-phospho-D-ribosyl)imidazole from N(2)-formyl-N(1)-(5-phospho-D-ribosyl)glycinamide: step 1/2. Its function is as follows. Part of the phosphoribosylformylglycinamidine synthase complex involved in the purines biosynthetic pathway. Catalyzes the ATP-dependent conversion of formylglycinamide ribonucleotide (FGAR) and glutamine to yield formylglycinamidine ribonucleotide (FGAM) and glutamate. The FGAM synthase complex is composed of three subunits. PurQ produces an ammonia molecule by converting glutamine to glutamate. PurL transfers the ammonia molecule to FGAR to form FGAM in an ATP-dependent manner. PurS interacts with PurQ and PurL and is thought to assist in the transfer of the ammonia molecule from PurQ to PurL. The sequence is that of Phosphoribosylformylglycinamidine synthase subunit PurL from Erythrobacter litoralis (strain HTCC2594).